Here is a 132-residue protein sequence, read N- to C-terminus: uncharacterized protein (132 aa).

Helical transmembrane passes span 18–38, 50–70, and 71–91; these read MLFIFMPFAITSFFAFLFIGI, IIYFFIFAFGFVLPDLPGVFI, and VVPLWAVTIIHGFKVRPLYLI.

The protein resides in the cell membrane. This is an uncharacterized protein from Bacillus subtilis (strain 168).